A 173-amino-acid polypeptide reads, in one-letter code: Shikimate kinase 1 (173 aa).

14-19 (GAGKST) contacts ATP. A Mg(2+)-binding site is contributed by S18. Positions 36, 60, and 82 each coordinate substrate. R120 is a binding site for ATP. R140 contacts substrate. Q157 is an ATP binding site.

This sequence belongs to the shikimate kinase family. Monomer. Mg(2+) serves as cofactor.

It is found in the cytoplasm. The catalysed reaction is shikimate + ATP = 3-phosphoshikimate + ADP + H(+). It participates in metabolic intermediate biosynthesis; chorismate biosynthesis; chorismate from D-erythrose 4-phosphate and phosphoenolpyruvate: step 5/7. Functionally, catalyzes the specific phosphorylation of the 3-hydroxyl group of shikimic acid using ATP as a cosubstrate. The chain is Shikimate kinase 1 from Escherichia fergusonii (strain ATCC 35469 / DSM 13698 / CCUG 18766 / IAM 14443 / JCM 21226 / LMG 7866 / NBRC 102419 / NCTC 12128 / CDC 0568-73).